The following is a 747-amino-acid chain: NAD(P)H-quinone oxidoreductase subunit 5, chloroplastic (747 aa).

16 helical membrane passes run 9–29 (WIIP…LLLF), 40–60 (WAFP…DLSI), 89–109 (IDSL…LVLI), 125–145 (FAYL…SNLI), 147–167 (VYIF…FWFT), 185–205 (GDFG…SLEF), 219–239 (NEVN…GSVA), 258–278 (TPIS…FLVA), 280–300 (LLPF…IGII), 327–347 (LGYM…FHLI), 354–374 (ALLF…VGYS), 396–416 (TAFL…CFWS), 425–445 (WLYS…TAFY), 552–572 (LFSM…GISF), 606–626 (FFTN…IASF), and 727–747 (YILF…SFFI).

It belongs to the complex I subunit 5 family. As to quaternary structure, NDH is composed of at least 16 different subunits, 5 of which are encoded in the nucleus.

It localises to the plastid. The protein localises to the chloroplast thylakoid membrane. The catalysed reaction is a plastoquinone + NADH + (n+1) H(+)(in) = a plastoquinol + NAD(+) + n H(+)(out). It catalyses the reaction a plastoquinone + NADPH + (n+1) H(+)(in) = a plastoquinol + NADP(+) + n H(+)(out). NDH shuttles electrons from NAD(P)H:plastoquinone, via FMN and iron-sulfur (Fe-S) centers, to quinones in the photosynthetic chain and possibly in a chloroplast respiratory chain. The immediate electron acceptor for the enzyme in this species is believed to be plastoquinone. Couples the redox reaction to proton translocation, and thus conserves the redox energy in a proton gradient. The protein is NAD(P)H-quinone oxidoreductase subunit 5, chloroplastic (ndhF) of Lotus japonicus (Lotus corniculatus var. japonicus).